Reading from the N-terminus, the 132-residue chain is MGNDTLANMITCIRNANLRKTKTVEILATNTNRSIAKILLEEGFIDELRERQEDTKRLLVITLRYQGRKRKPYITTVKQISKAGLRVYSNHKDIPRVLGGMGIVILSTSQGIIIDREARDKQIGGEILCYVW.

It belongs to the universal ribosomal protein uS8 family. As to quaternary structure, part of the 30S ribosomal subunit.

It localises to the plastid. It is found in the chloroplast. In terms of biological role, one of the primary rRNA binding proteins, it binds directly to 16S rRNA central domain where it helps coordinate assembly of the platform of the 30S subunit. In Staurastrum punctulatum (Green alga), this protein is Small ribosomal subunit protein uS8c (rps8).